The sequence spans 112 residues: HTH-type transcriptional regulator YodB (112 aa).

Positions 6–105 constitute an HTH hxlR-type domain; the sequence is CPKMESAFSL…WADQFCEPGD (100 aa).

Negatively regulates yodC and azoR1 which may contribute to the degradation of aromatic compounds. Probably positively regulates the catechol-specific transcription of mhqNOP, mhqED, and mhqA. This chain is HTH-type transcriptional regulator YodB (yodB), found in Bacillus subtilis (strain 168).